Here is a 703-residue protein sequence, read N- to C-terminus: DnaJ homolog subfamily C member 14 (703 aa).

Disordered regions lie at residues 1-150 (MAQK…DGSS) and 164-229 (EDEE…RKRS). Residues 17 to 28 (SGGSSLITSGSS) show a composition bias toward low complexity. Residues 75 to 84 (HGPPRGPGPP) show a composition bias toward pro residues. Acidic residues-rich tracts occupy residues 89–102 (YPDE…ESGV) and 164–176 (EDEE…DDEE). The span at 193–202 (PPSRRQRHRF) shows a compositional bias: basic residues. Over residues 203-218 (LTKEDVRDSGRRDPKA) the composition is skewed to basic and acidic residues. The segment covering 219 to 228 (PGRHRLARKR) has biased composition (basic residues). A run of 3 helical transmembrane segments spans residues 254–274 (WWLI…GYLI), 305–325 (VMFQ…IRLL), and 327–347 (VVGA…QLGW). The J domain maps to 444–508 (NPFHVLGVEA…ERRKEYEMKR (65 aa)). Disordered regions lie at residues 622 to 643 (FGSR…PPAD) and 659 to 703 (MSNG…PFQR). Over residues 673–684 (GTTSTSRPNSSV) the composition is skewed to polar residues. The segment covering 691 to 703 (PKRRKKVRRPFQR) has biased composition (basic residues).

In terms of assembly, interacts with the FxxxFxxxF motif of DRD1 via its C-terminal domain. In terms of tissue distribution, detected in heart, brain, lung, liver, skeletal muscle, kidney and testis.

It localises to the endoplasmic reticulum membrane. Regulates the export of target proteins, such as DRD1, from the endoplasmic reticulum to the cell surface. The polypeptide is DnaJ homolog subfamily C member 14 (Dnajc14) (Rattus norvegicus (Rat)).